We begin with the raw amino-acid sequence, 454 residues long: Alpha-1,3-mannosyl-glycoprotein 4-beta-N-acetylglucosaminyltransferase C (454 aa).

At 1–6 the chain is on the cytoplasmic side; it reads MRCHLK. Residues 7 to 24 traverse the membrane as a helical; Signal-anchor for type II membrane protein segment; that stretch reads KWVVVAAGLSILTSLYVY. The Lumenal portion of the chain corresponds to 25 to 454; sequence MQRAQSGNLK…VWTVKEDKTI (430 aa). Asn-58 and Asn-189 each carry an N-linked (GlcNAc...) asparagine glycan.

This sequence belongs to the glycosyltransferase 54 family. The cofactor is a divalent metal cation.

It localises to the golgi apparatus membrane. It carries out the reaction N(4)-{beta-D-GlcNAc-(1-&gt;2)-alpha-D-Man-(1-&gt;3)-[beta-D-GlcNAc-(1-&gt;2)-alpha-D-Man-(1-&gt;6)]-beta-D-Man-(1-&gt;4)-beta-D-GlcNAc-(1-&gt;4)-beta-D-GlcNAc}-L-asparaginyl-[protein] + UDP-N-acetyl-alpha-D-glucosamine = N(4)-{beta-D-GlcNAc-(1-&gt;2)-[beta-D-GlcNAc-(1-&gt;4)]-alpha-D-Man-(1-&gt;3)-[beta-D-GlcNAc-(1-&gt;2)-alpha-D-Man-(1-&gt;6)]-beta-D-Man-(1-&gt;4)-beta-D-GlcNAc-(1-&gt;4)-beta-D-GlcNAc}-L-asparaginyl-[protein] + UDP + H(+). The protein operates within protein modification; protein glycosylation. Glycosyltransferase that participates in the transfer of N-acetylglucosamine (GlcNAc) to the core mannose residues of N-linked glycans. Catalyzes the formation of the GlcNAcbeta1-4 branch on the GlcNAcbeta1-2Manalpha1-3 arm of the core structure of N-linked glycans. This is Alpha-1,3-mannosyl-glycoprotein 4-beta-N-acetylglucosaminyltransferase C (mgat4c) from Danio rerio (Zebrafish).